We begin with the raw amino-acid sequence, 142 residues long: UPF0179 protein PH1477 (142 aa).

This sequence belongs to the UPF0179 family.

This Pyrococcus horikoshii (strain ATCC 700860 / DSM 12428 / JCM 9974 / NBRC 100139 / OT-3) protein is UPF0179 protein PH1477.